Consider the following 179-residue polypeptide: Large ribosomal subunit protein uL5 (179 aa).

It belongs to the universal ribosomal protein uL5 family. Part of the 50S ribosomal subunit; part of the 5S rRNA/L5/L18/L25 subcomplex. Contacts the 5S rRNA and the P site tRNA. Forms a bridge to the 30S subunit in the 70S ribosome.

This is one of the proteins that bind and probably mediate the attachment of the 5S RNA into the large ribosomal subunit, where it forms part of the central protuberance. In the 70S ribosome it contacts protein S13 of the 30S subunit (bridge B1b), connecting the 2 subunits; this bridge is implicated in subunit movement. Contacts the P site tRNA; the 5S rRNA and some of its associated proteins might help stabilize positioning of ribosome-bound tRNAs. This Bacillus cereus (strain 03BB102) protein is Large ribosomal subunit protein uL5.